Reading from the N-terminus, the 110-residue chain is U1-lycotoxin-Ls1kk (110 aa).

Positions 1–20 (MKFVLLFGVFLVTLFSYSSA) are cleaved as a signal peptide. Positions 21–44 (EMLDDFDQADEDELLSLIEKEEAR) are excised as a propeptide. Disulfide bonds link Cys47/Cys62, Cys54/Cys71, Cys61/Cys89, and Cys73/Cys87.

Belongs to the neurotoxin 19 (CSTX) family. 03 subfamily. As to expression, expressed by the venom gland.

Its subcellular location is the secreted. In Lycosa singoriensis (Wolf spider), this protein is U1-lycotoxin-Ls1kk.